The chain runs to 156 residues: Small ribosomal subunit protein uS7 (156 aa).

The protein belongs to the universal ribosomal protein uS7 family. In terms of assembly, part of the 30S ribosomal subunit. Contacts proteins S9 and S11.

One of the primary rRNA binding proteins, it binds directly to 16S rRNA where it nucleates assembly of the head domain of the 30S subunit. Is located at the subunit interface close to the decoding center, probably blocks exit of the E-site tRNA. The sequence is that of Small ribosomal subunit protein uS7 from Solidesulfovibrio magneticus (strain ATCC 700980 / DSM 13731 / RS-1) (Desulfovibrio magneticus).